Here is a 517-residue protein sequence, read N- to C-terminus: Putative transporter C543.05c (517 aa).

The next 11 membrane-spanning stretches (helical) occupy residues 68-88 (SFGVNEVLLASVLGSVVFALL), 93-113 (LCIVGVTGPITVFNYTVYDIM), 121-141 (FPFLCWICLWSMIFHFIIAIA), 155-175 (CEIFGLYVAFIYLEKGVQVLC), 186-206 (FLSITIALLFLMVGWLCDTVG), 217-237 (ILLLDYGLVASIIFFSGFQHI), 269-289 (IPVGDVFLAIPFSIVLTILFY), 311-331 (GFHWDFFLLGITTGVSGILGI), 377-397 (SNFIQGLMTVGTMTGPLLLVL), 403-423 (CVLAGLFWVMGFSAIFGNGIT), and 449-471 (RVVWLYTILQLIGFGATFAITQV).

Belongs to the anion exchanger (TC 2.A.31) family.

Its subcellular location is the vacuole membrane. The polypeptide is Putative transporter C543.05c (Schizosaccharomyces pombe (strain 972 / ATCC 24843) (Fission yeast)).